A 63-amino-acid chain; its full sequence is Translational regulator CsrA (63 aa).

It belongs to the CsrA/RsmA family. Homodimer; the beta-strands of each monomer intercalate to form a hydrophobic core, while the alpha-helices form wings that extend away from the core.

It is found in the cytoplasm. Functionally, a key translational regulator that binds mRNA to regulate translation initiation and/or mRNA stability. Mediates global changes in gene expression, shifting from rapid growth to stress survival by linking envelope stress, the stringent response and the catabolite repression systems. Usually binds in the 5'-UTR; binding at or near the Shine-Dalgarno sequence prevents ribosome-binding, repressing translation, binding elsewhere in the 5'-UTR can activate translation and/or stabilize the mRNA. Its function is antagonized by small RNA(s). This Haemophilus influenzae (strain PittEE) protein is Translational regulator CsrA.